A 599-amino-acid polypeptide reads, in one-letter code: MKHIRNFSIIAHIDHGKSTLSDRIIQICGGLTEREMAAQVLDSMDLERERGITIKAQSVTLDYKAQDGQTYQLNFIDTPGHVDFSYEVSRSLAACEGALLVVDAGQGVEAQTLANCYTALDMNLEVVPVLNKIDLPAADPDRVAQEIEDIVGIDATDAVRCSAKTGIGVPDVLDRLVRDIPPPEGSPDEPLQALIIDSWFDNYLGVVSLVRIKNGTMRKGDKIKVMSTGQVYNADRLGIFTPKQIDRDVLNCGEVGWLVCAIKDILGAPVGDTLTLARQPAEKALPGFKKVKPQVYAGLFPISSDDYESFRDALGKLSLNDASLFYEPESSTALGFGFRCGFLGLLHMEIIQERLEREYDLDLITTAPTVVYEVETTAKETVYVDSPSKLPPLNNIQELREPIAECHMLLPQEYLGNVITLCIEKRGVQTNMVYHGNQVALTYEIPMAEVVLDFFDRLKSTSRGYASLDYSFKRFQTSDMVRVDVLINNERVDALALITHRDNSQYRGRELVEKMKDLIPRQQFDIAIQAAIGNHIIARSTVKQLRKNVLAKCYGGDVSRKKKLLQKQKDGKKRMKQVGNVELPQEAFLAILHVGKDSK.

The 183-residue stretch at 2 to 184 (KHIRNFSIIA…RLVRDIPPPE (183 aa)) folds into the tr-type G domain. Residues 14 to 19 (DHGKST) and 131 to 134 (NKID) contribute to the GTP site.

Belongs to the TRAFAC class translation factor GTPase superfamily. Classic translation factor GTPase family. LepA subfamily.

The protein localises to the cell inner membrane. The enzyme catalyses GTP + H2O = GDP + phosphate + H(+). In terms of biological role, required for accurate and efficient protein synthesis under certain stress conditions. May act as a fidelity factor of the translation reaction, by catalyzing a one-codon backward translocation of tRNAs on improperly translocated ribosomes. Back-translocation proceeds from a post-translocation (POST) complex to a pre-translocation (PRE) complex, thus giving elongation factor G a second chance to translocate the tRNAs correctly. Binds to ribosomes in a GTP-dependent manner. The polypeptide is Elongation factor 4 (Pectobacterium carotovorum subsp. carotovorum (strain PC1)).